Here is a 607-residue protein sequence, read N- to C-terminus: Branchpoint-bridging protein (607 aa).

Composition is skewed to polar residues over residues 1–15 and 35–45; these read MSWRNQGITGSNNIP and VTPSAPSSVTN. 2 disordered regions span residues 1 to 92 and 134 to 155; these read MSWR…TENK and VPADGDRSPSPAPQYDNHGRRV. Over residues 46–76 the composition is skewed to basic and acidic residues; that stretch reads GDRDRDRDGPVYSNDRDVKRGRSPERSEDGP. A KH domain is found at 201 to 281; that stretch reads YVPVNDYPEI…EKVNKAKKLI (81 aa). 2 consecutive CCHC-type zinc fingers follow at residues 319–336 and 344–361; these read QACQNCGQIGHRKYDCPE and IICRVCGNAGHMARDCPD. 2 disordered regions span residues 363 to 390 and 407 to 607; these read QRGASWRNDGPGAGRTAGRIGSSGGGDA and AAPA…PPGA. Over residues 373–389 the composition is skewed to gly residues; that stretch reads PGAGRTAGRIGSSGGGD. The span at 472–500 shows a compositional bias: basic and acidic residues; the sequence is ARDRNERRHDDRDRGDSYYGGDRRHDDYG. Residues 521-533 are compositionally biased toward low complexity; it reads SAPAIPTAPAYPG. Positions 534 to 545 are enriched in gly residues; sequence AYGGYPGYGAPP. Composition is skewed to pro residues over residues 550–563 and 581–607; these read APPPGLPPPPPGAP and APPPPPPAAEAPPPPPMDLPPPPPPGA.

This sequence belongs to the BBP/SF1 family.

The protein localises to the nucleus. Its function is as follows. Necessary for the splicing of pre-mRNA. Has a role in the recognition of the branch site (5'-UACUAAC-3'), the pyrimidine tract and the 3'-splice site at the 3'-end of introns. This is Branchpoint-bridging protein (bbp-1) from Neurospora crassa (strain ATCC 24698 / 74-OR23-1A / CBS 708.71 / DSM 1257 / FGSC 987).